An 871-amino-acid chain; its full sequence is MEKQTGELDLEFFLNSGFEKKQCIKCGSYFWTQDKERNTCGDTPCDEYTFIGNSPVPKSYSLSEMRDAFIKFFEKRGHKFLKPYPVVPRWREDVLLVNASIYDFQPHVTSGIVRPPGNPIVMSQPSIRMNDVDLVGITGRHLTSFEMLCHDSFNTKDKTVYWKEETVHYCYDFLTEGLGIDGKLISFKEKPWSGGGNAGNALEVFVRGLEVATLVFMDMKEDPNGPYEIDGIRYSKMDMRIVDTGYGLERLTWLSQGTPTVYQAIYPDIIQHVMKNSSVSDIDEEFLSEVVKASVMKEPYEESFVISQLEKRYPDARQRFEEIKKVRDVFLMIDHARSLMHMFAAYVIPSNVKVGYLARMLIRRAYRAISNTGYRGSLMDLIRMNHEDLKDIVPDFPEQFVSDVLSIEEEKYRDVERHGTQIIDKMISNKGKLSLDDLVLLYDSHGISPETVKAYLETKGMEIDVPDNFHAIVIKRHEKGETEKKKYSDYPEIETRTLYYDDPFMREFTGLVLFSKGNEIILDKTAFYPEGGGQPWDLGYFEYKGKRINVVAVRKYGKTIVHTLDGEIPQGVRVHGVIDWERRSRLMVHHTSTHLLLGVLREVLGEHVWQNGVQKDVEESRLDITHYRKIDEETIRKIEERVFDLIREGREVSVRNLDWYSAIDKYGFRLFEGGVPLTPKIRVVEIQGVDAEGCGGTHLKNISSIGVLKIRKVEAIQENIYRITFSAGVPALHLFQESYEASYGISTLLKKPIEEIAQSVSELSKGYADLRRSLAEARRRDIENRIANAKKIGTPGAEYPIIEADDADIGEISRIAHSRKVDLIVETRIAGKFKYTAISPSKKARDMIRKLFNADPEGNDSMASYINEYSE.

Zn(2+)-binding residues include histidine 590, histidine 594, cysteine 694, and histidine 698.

It belongs to the class-II aminoacyl-tRNA synthetase family. Zn(2+) is required as a cofactor.

The protein resides in the cytoplasm. The enzyme catalyses tRNA(Ala) + L-alanine + ATP = L-alanyl-tRNA(Ala) + AMP + diphosphate. Its function is as follows. Catalyzes the attachment of alanine to tRNA(Ala) in a two-step reaction: alanine is first activated by ATP to form Ala-AMP and then transferred to the acceptor end of tRNA(Ala). Also edits incorrectly charged Ser-tRNA(Ala) and Gly-tRNA(Ala) via its editing domain. This is Alanine--tRNA ligase from Thermoplasma acidophilum (strain ATCC 25905 / DSM 1728 / JCM 9062 / NBRC 15155 / AMRC-C165).